The following is a 376-amino-acid chain: Alpha-2,8-sialyltransferase 8E (376 aa).

A helical membrane pass occupies residues 17 to 37 (TLLFIFICAFALVTLLQQILY). Asparagine 56 carries N-linked (GlcNAc...) asparagine glycosylation. 2 cysteine pairs are disulfide-bonded: cysteine 164-cysteine 313 and cysteine 178-cysteine 373. Substrate-binding positions include asparagine 192 and 214–216 (NPS). Asparagine 241 carries N-linked (GlcNAc...) asparagine glycosylation. Residue 300-302 (STG) coordinates substrate. Histidine 348 serves as the catalytic Proton donor/acceptor.

It belongs to the glycosyltransferase 29 family. In terms of tissue distribution, expressed in liver.

It localises to the golgi apparatus membrane. The catalysed reaction is a ganglioside GT1b (d18:1(4E)) + CMP-N-acetyl-beta-neuraminate = a ganglioside GQ1b (d18:1(4E)) + CMP + H(+). It carries out the reaction a ganglioside GQ1c (d18:1(4E)) + CMP-N-acetyl-beta-neuraminate = a ganglioside GP1c (d18:1(4E)) + CMP + H(+). The enzyme catalyses a ganglioside GD3 (d18:1(4E)) + CMP-N-acetyl-beta-neuraminate = a ganglioside GT3 (d18:1(4E)) + CMP + H(+). It catalyses the reaction a ganglioside GD1a (d18:1(4E)) + CMP-N-acetyl-beta-neuraminate = a ganglioside GT1a (d18:1(4E)) + CMP + H(+). The catalysed reaction is a ganglioside GM1b (d18:1(4E)) + CMP-N-acetyl-beta-neuraminate = a ganglioside GD1c (d18:1(4E)) + CMP + H(+). It functions in the pathway protein modification; protein glycosylation. Involved in the synthesis of gangliosides GD1c, GT1a, GQ1b, GP1c and GT3 from GD1a, GT1b, GM1b and GD3 respectively. The protein is Alpha-2,8-sialyltransferase 8E of Rattus norvegicus (Rat).